The following is a 1104-amino-acid chain: MERSPGEGPSPSPMDQPSAPSDPTDQPPAAHAKPDPGSGGQPAGPGAAGEALAVLTSFGRRLLVLIPVYLAGAVGLSVGFVLFGLALYLGWRRVRDEKERSLRAARQLLDDEEQLTAKTLYMSHRELPAWVSFPDVEKAEWLNKIVAQVWPFLGQYMEKLLAETVAPAVRGSNPHLQTFTFTRVELGEKPLRIIGVKVHPGQRKEQILLDLNISYVGDVQIDVEVKKYFCKAGVKGMQLHGVLRVILEPLIGDLPFVGAVSMFFIRRPTLDINWTGMTNLLDIPGLSSLSDTMIMDSIAAFLVLPNRLLVPLVPDLQDVAQLRSPLPRGIIRIHLLAARGLSSKDKYVKGLIEGKSDPYALVRLGTQTFCSRVIDEELNPQWGETYEVMVHEVPGQEIEVEVFDKDPDKDDFLGRMKLDVGKVLQASVLDDWFPLQGGQGQVHLRLEWLSLLSDAEKLEQVLQWNWGVSSRPDPPSAAILVVYLDRAQDLPLKKGNKEPNPMVQLSIQDVTQESKAVYSTNCPVWEEAFRFFLQDPQSQELDVQVKDDSRALTLGALTLPLARLLTAPELILDQWFQLSSSGPNSRLYMKLVMRILYLDSSEICFPTVPGCPGAWDVDSENPQRGSSVDAPPRPCHTTPDSQFGTEHVLRIHVLEAQDLIAKDRFLGGLVKGKSDPYVKLKLAGRSFRSHVVREDLNPRWNEVFEVIVTSVPGQELEVEVFDKDLDKDDFLGRCKVRLTTVLNSGFLDEWLTLEDVPSGRLHLRLERLTPRPTAAELEEVLQVNSLIQTQKSAELAAALLSIYMERAEDLPLRKGTKHLSPYATLTVGDSSHKTKTISQTSAPVWDESASFLIRKPHTESLELQVRGEGTGVLGSLSLPLSELLVADQLCLDRWFTLSSGQGQVLLRAQLGILVSQHSGVEAHSHSYSHSSSSLSEEPELSGGPPHITSSAPELRQRLTHVDSPLEAPAGPLGQVKLTLWYYSEERKLVSIVHGCRSLRQNGRDPPDPYVSLLLLPDKNRGTKRRTSQKKRTLSPEFNERFEWELPLDEAQRRKLDVSVKSNSSFMSRERELLGKVQLDLAETDLSQGVARWYDLMDNKDKGSS.

M1 is subject to N-acetylmethionine. Topologically, residues 1–38 (MERSPGEGPSPSPMDQPSAPSDPTDQPPAAHAKPDPGS) are cytoplasmic. The tract at residues 1–48 (MERSPGEGPSPSPMDQPSAPSDPTDQPPAAHAKPDPGSGGQPAGPGAA) is disordered. Positions 37–47 (GSGGQPAGPGA) are enriched in gly residues. Residues 39–59 (GGQPAGPGAAGEALAVLTSFG) form a helical membrane-spanning segment. Topologically, residues 60–62 (RRL) are lumenal. Residues 63-83 (LVLIPVYLAGAVGLSVGFVLF) traverse the membrane as a helical segment. The Cytoplasmic portion of the chain corresponds to 84 to 1104 (GLALYLGWRR…LMDNKDKGSS (1021 aa)). Residues 91–116 (WRRVRDEKERSLRAARQLLDDEEQLT) adopt a coiled-coil conformation. The SMP-LTD domain occupies 135 to 313 (DVEKAEWLNK…LPNRLLVPLV (179 aa)). 4 C2 domains span residues 312 to 433 (LVPD…DDWF), 460 to 580 (QVLQ…QLSS), 627 to 751 (SVDA…DEWL), and 777 to 899 (LEEV…TLSS). The residue at position 324 (S324) is a Phosphoserine; by CDK5. Residues K344, D345, D357, D404, D406, D408, D410, and D411 each coordinate Ca(2+). The segment at 617–641 (VDSENPQRGSSVDAPPRPCHTTPDS) is disordered. K817 carries the N6-acetyllysine modification. 2 positions are modified to phosphoserine: S820 and S941. Residues 924-950 (SHSYSHSSSSLSEEPELSGGPPHITSS) form a disordered region. Residues 925–946 (HSYSHSSSSLSEEPELSGGPPH) are compositionally biased toward low complexity. T948 bears the Phosphothreonine mark. Phosphoserine is present on residues S949 and S963. Residues 971–1093 (PLGQVKLTLW…DLSQGVARWY (123 aa)) form the C2 5 domain. Y1009 carries the phosphotyrosine modification. Residues 1018 to 1025 (KNRGTKRR) form a required for phosphatidylinositol 4,5-bisphosphate-dependent location at the cell membrane region. S1034 carries the phosphoserine modification.

It belongs to the extended synaptotagmin family. Interacts with ESYT2 and ESYT3. Interacts with ADGRD1; inhibiting the G-protein-coupled receptor activity of ADGRD1. Interaction with ADGRD1 is abolished when cytosolic calcium increases, relieving ADGRD1 G-protein-coupled receptor activity. Interacts (phosphorylated form) with SLC2A4. In terms of processing, phosphorylated on Ser residues in insulin-treated adipocytes (in vitro); this promotes interaction with SLC2A4. As to expression, widely expressed.

It is found in the endoplasmic reticulum membrane. Its subcellular location is the cell membrane. Functionally, binds calcium (via the C2 domains) and translocates to sites of contact between the endoplasmic reticulum and the cell membrane in response to increased cytosolic calcium levels. Helps tether the endoplasmic reticulum to the cell membrane and promotes the formation of appositions between the endoplasmic reticulum and the cell membrane. Acts as an inhibitor of ADGRD1 G-protein-coupled receptor activity in absence of cytosolic calcium. Binds glycerophospholipids in a barrel-like domain and may play a role in cellular lipid transport. In Homo sapiens (Human), this protein is Extended synaptotagmin-1.